The sequence spans 151 residues: Deoxyuridine 5'-triphosphate nucleotidohydrolase (151 aa).

Residues 70–72 (RSG), N83, 87–89 (LID), and M97 each bind substrate.

It belongs to the dUTPase family. Mg(2+) serves as cofactor.

The catalysed reaction is dUTP + H2O = dUMP + diphosphate + H(+). The protein operates within pyrimidine metabolism; dUMP biosynthesis; dUMP from dCTP (dUTP route): step 2/2. In terms of biological role, this enzyme is involved in nucleotide metabolism: it produces dUMP, the immediate precursor of thymidine nucleotides and it decreases the intracellular concentration of dUTP so that uracil cannot be incorporated into DNA. This chain is Deoxyuridine 5'-triphosphate nucleotidohydrolase, found in Actinobacillus succinogenes (strain ATCC 55618 / DSM 22257 / CCUG 43843 / 130Z).